A 70-amino-acid polypeptide reads, in one-letter code: Putative membrane protein insertion efficiency factor (70 aa).

It belongs to the UPF0161 family.

It is found in the cell inner membrane. Could be involved in insertion of integral membrane proteins into the membrane. This Rhizorhabdus wittichii (strain DSM 6014 / CCUG 31198 / JCM 15750 / NBRC 105917 / EY 4224 / RW1) (Sphingomonas wittichii) protein is Putative membrane protein insertion efficiency factor.